The sequence spans 274 residues: Penicillin-insensitive murein endopeptidase (274 aa).

The signal sequence occupies residues 1 to 19; the sequence is MNKTAIALLALLASSASLA. Intrachain disulfides connect cysteine 44–cysteine 265, cysteine 187–cysteine 235, and cysteine 216–cysteine 223. The Zn(2+) site is built by histidine 110, histidine 113, aspartate 120, aspartate 147, histidine 150, and histidine 211. Residues 227 to 274 are disordered; sequence PLPPPGDGCGAELQSWFEPPKPGTTKPEKKTPPPLPPSCQALLDEHVI.

It belongs to the peptidase M74 family. Dimer. Zn(2+) serves as cofactor.

The protein resides in the periplasm. Its function is as follows. Murein endopeptidase that cleaves the D-alanyl-meso-2,6-diamino-pimelyl amide bond that connects peptidoglycan strands. Likely plays a role in the removal of murein from the sacculus. This chain is Penicillin-insensitive murein endopeptidase, found in Escherichia coli O17:K52:H18 (strain UMN026 / ExPEC).